A 161-amino-acid polypeptide reads, in one-letter code: MLILDRSSPQIFISNEQQDVDIDLQSVQRLVILFLELQKVSTDQVYIYFLSDAALAQLHDEQFSDPSLTDTITLPIDRPGIQSFPHVLGEAFVSPRAAMRFLGQYTEAQLYHEISRYVVHSLLHMLGYDDQTDEDKRIMREQEDSSLTFLAQNQALLHPTV.

Residues histidine 120, histidine 124, and aspartate 130 each coordinate Zn(2+).

Belongs to the endoribonuclease YbeY family. It depends on Zn(2+) as a cofactor.

The protein localises to the cytoplasm. Its function is as follows. Single strand-specific metallo-endoribonuclease involved in late-stage 70S ribosome quality control and in maturation of the 3' terminus of the 16S rRNA. The protein is Endoribonuclease YbeY of Chlamydia muridarum (strain MoPn / Nigg).